We begin with the raw amino-acid sequence, 63 residues long: Large ribosomal subunit protein uL29 (63 aa).

This sequence belongs to the universal ribosomal protein uL29 family.

The chain is Large ribosomal subunit protein uL29 from Neisseria meningitidis serogroup C (strain 053442).